The chain runs to 214 residues: Putative germin-like protein 9-2 (214 aa).

A signal peptide spans 1-25 (MALSYYSLLLLLLAVWAPALTLVMA). Residues N44 and N60 are each glycosylated (N-linked (GlcNAc...) asparagine). Residues 56 to 202 (RKVFNTSSAP…SFKTDVPTIL (147 aa)) enclose the Cupin type-1 domain. Mn(2+) is bound by residues H104, H106, E111, and H150.

It belongs to the germin family. In terms of assembly, oligomer (believed to be a pentamer but probably hexamer).

It is found in the secreted. The protein resides in the extracellular space. Its subcellular location is the apoplast. May play a role in plant defense. Probably has no oxalate oxidase activity even if the active site is conserved. In Oryza sativa subsp. japonica (Rice), this protein is Putative germin-like protein 9-2.